A 123-amino-acid polypeptide reads, in one-letter code: uncharacterized protein (123 aa).

Residues 14 to 34 form a helical membrane-spanning segment; it reads VVLKITAVVCSVFSIRVLILA.

It is found in the membrane. This is an uncharacterized protein from Saccharomyces cerevisiae (strain ATCC 204508 / S288c) (Baker's yeast).